A 183-amino-acid chain; its full sequence is Beta-defensin 129 (183 aa).

Positions 1 to 19 are cleaved as a signal peptide; it reads MKLLFPIFASLMLQYQVNT. Intrachain disulfides connect Cys-27/Cys-53, Cys-34/Cys-48, and Cys-38/Cys-54. A disordered region spans residues 142–183; sequence ATSAKSNTKESGDSATASPPPAPPPPNILPTPSLELEEAEEQ. The span at 159–170 shows a compositional bias: pro residues; it reads SPPPAPPPPNIL.

It belongs to the beta-defensin family.

It is found in the secreted. In terms of biological role, has antibacterial activity. This Macaca fascicularis (Crab-eating macaque) protein is Beta-defensin 129 (DEFB129).